The primary structure comprises 309 residues: MAGFYGRDIISVRDLDRQALEEVFRYTEKFVKMTPSERRSVAGGRTLGYLFYEPSTRTRLSFQAAMASAGGTSLGIADVSSSSIQKGESLADTVRMMAMYSDALVLRHPLDGSSRFAAEVSDKPVINAGSGTEEHPTQAIQDLFTIRREKGGIDGLNIGVVGDLKYGRTVYSLLHALGNYDVKVSLISPEPLRIRTDSIYDIRTKLDFAESESLDEYVDELDVVYVTRIQKERFPDEEEYLKVKGSYVIGLDMLRKMKDGAIILHPLPRLDEISGEVDGTDKAKYFVQAEYGVYTRAALLGLVLNEGGF.

Arg-57 and Thr-58 together coordinate carbamoyl phosphate. Lys-86 serves as a coordination point for L-aspartate. Carbamoyl phosphate contacts are provided by Arg-107, His-135, and Gln-138. L-aspartate is bound by residues Arg-168 and Arg-228. Carbamoyl phosphate-binding residues include Leu-267 and Pro-268.

Belongs to the aspartate/ornithine carbamoyltransferase superfamily. ATCase family. In terms of assembly, heterooligomer of catalytic and regulatory chains.

It catalyses the reaction carbamoyl phosphate + L-aspartate = N-carbamoyl-L-aspartate + phosphate + H(+). Its pathway is pyrimidine metabolism; UMP biosynthesis via de novo pathway; (S)-dihydroorotate from bicarbonate: step 2/3. Functionally, catalyzes the condensation of carbamoyl phosphate and aspartate to form carbamoyl aspartate and inorganic phosphate, the committed step in the de novo pyrimidine nucleotide biosynthesis pathway. This Cenarchaeum symbiosum (strain A) protein is Aspartate carbamoyltransferase catalytic subunit.